Consider the following 1556-residue polypeptide: Ferredoxin-dependent glutamate synthase 2 (1556 aa).

Residue C37 is the For GATase activity of the active site. Residues 37-431 (CGVGFIANLR…PGQMIAVDLA (395 aa)) form the Glutamine amidotransferase type-2 domain. Residues C1173, C1179, and C1184 each contribute to the [3Fe-4S] cluster site. Residues 1533-1556 (PSEKDSPEANGDVSLTGEKTLTSV) are disordered.

It belongs to the glutamate synthase family. Requires [3Fe-4S] cluster as cofactor. FAD is required as a cofactor. The cofactor is FMN.

It carries out the reaction 2 oxidized [2Fe-2S]-[ferredoxin] + 2 L-glutamate = L-glutamine + 2 reduced [2Fe-2S]-[ferredoxin] + 2-oxoglutarate + 2 H(+). The protein operates within amino-acid biosynthesis; L-glutamate biosynthesis via GLT pathway; L-glutamate from 2-oxoglutarate and L-glutamine (ferredoxin route): step 1/1. It participates in energy metabolism; nitrogen metabolism. The chain is Ferredoxin-dependent glutamate synthase 2 (gltS) from Synechocystis sp. (strain ATCC 27184 / PCC 6803 / Kazusa).